Consider the following 215-residue polypeptide: uncharacterized protein (215 aa).

The signal sequence occupies residues 1–17 (MKKVLASATILSLMLVG). Residues 17–110 (GCSNGGNDES…NKQQQSVQDN (94 aa)) are disordered. Cys18 carries N-palmitoyl cysteine lipidation. Cys18 carries S-diacylglycerol cysteine lipidation. The segment covering 25-62 (ESSHKDDSSKTEQKDKSSSQHDSKKDSKRNDTNNKQDN) has biased composition (basic and acidic residues). Composition is skewed to low complexity over residues 63–76 (QENN…NNQN) and 91–110 (NSNG…VQDN).

It is found in the cell membrane. This is an uncharacterized protein from Staphylococcus epidermidis (strain ATCC 35984 / DSM 28319 / BCRC 17069 / CCUG 31568 / BM 3577 / RP62A).